We begin with the raw amino-acid sequence, 206 residues long: uncharacterized protein (206 aa).

Residues 29 to 169 form the Nudix hydrolase domain; that stretch reads YWHSTFHCWV…DGVFAEGFIV (141 aa). The Nudix box motif lies at 69-90; that stretch reads AGHIKSGESIEDGVRELKEELG. Residues Glu84 and Glu88 each contribute to the Mg(2+) site.

The protein belongs to the Nudix hydrolase family. Mg(2+) is required as a cofactor.

This is an uncharacterized protein from Clostridium acetobutylicum (strain ATCC 824 / DSM 792 / JCM 1419 / IAM 19013 / LMG 5710 / NBRC 13948 / NRRL B-527 / VKM B-1787 / 2291 / W).